A 117-amino-acid polypeptide reads, in one-letter code: Cliotide T9 (117 aa).

Residues 1–25 (MAYVRLACLAVIFFFAASVMFTVEA) form the signal peptide. Residues 26–55 (GIPCGESCVFIPCLTTVVGCSCKNKVCYNN) constitute a cross-link (cyclopeptide (Gly-Asn)). Cystine bridges form between Cys29–Cys45, Cys33–Cys47, and Cys38–Cys52. A propeptide spans 56–117 (HVIAAEANSI…YLLKDFLKMP (62 aa)) (removed in mature form).

In terms of processing, contains 3 disulfide bonds. Post-translationally, this is a cyclic peptide. As to expression, expressed in seed but not in root, nodule, flower, stem, shoot, leaf and pod (at protein level).

Its function is as follows. Probably participates in a plant defense mechanism. This Clitoria ternatea (Butterfly pea) protein is Cliotide T9.